The sequence spans 266 residues: Type II iodothyronine deiodinase (266 aa).

Residues Met-1 to Leu-9 lie on the Lumenal side of the membrane. The helical; Signal-anchor for type III membrane protein transmembrane segment at Ile-10–Leu-34 threads the bilayer. At Lys-35–Asp-266 the chain is on the cytoplasmic side. Residue Sec-130 is part of the active site. 2 non-standard amino acids (selenocysteine) are found at residues Sec-130 and Sec-263.

The protein belongs to the iodothyronine deiodinase family. In terms of assembly, predominantly monomer. Can form homodimers but homodimerization is not essential for enzyme activity. Interacts with USP20 and USP33. Interacts with MARCHF6. In terms of processing, ubiquitinated by MARCHF6, leading to its degradation by the proteasome. Deubiquitinated by USP20 and USP33. Expressed in mammary gland and in brain.

The protein localises to the endoplasmic reticulum membrane. The enzyme catalyses 3,3',5-triiodo-L-thyronine + iodide + A + H(+) = L-thyroxine + AH2. It catalyses the reaction 3,3'-diiodo-L-thyronine + iodide + A + H(+) = 3,3',5'-triiodo-L-thyronine + AH2. It carries out the reaction 3'-iodo-L-thyronine + iodide + A + H(+) = 3',5'-diiodo-L-thyronine + AH2. The catalysed reaction is 3,3'-diiodothyronamine + iodide + A + H(+) = 3,3',5'-triiodothyronamine + AH2. The enzyme catalyses 3'-iodothyronamine + iodide + A + H(+) = 3',5'-diiodothyronamine + AH2. In terms of biological role, plays a crucial role in the metabolism of thyroid hormones (TH) and has specific roles in TH activation and inactivation by deiodination. Catalyzes the deiodination of L-thyroxine (T4) to 3,5,3'-triiodothyronine (T3) and 3,3',5'-triiodothyronine (rT3) to 3,3'-diiodothyronine (3,3'-T2) via outer-ring deiodination (ORD). Catalyzes the deiodination of 3',5'-diiodothyronine (3',5'-T2) to 3'-monoiodothyronine (3'-T1) via ORD. Catalyzes the phenolic ring deiodinations of 3,3',5'-triiodothyronamine and 3',5'- diiodothyronamine. This is Type II iodothyronine deiodinase (Dio2) from Mus musculus (Mouse).